The following is a 334-amino-acid chain: Glyceraldehyde-3-phosphate dehydrogenase (334 aa).

NAD(+) is bound by residues 11–12 (RI), Asp-33, and Ser-119. D-glyceraldehyde 3-phosphate contacts are provided by residues 149–151 (SCT) and Thr-180. Residue Cys-150 is the Nucleophile of the active site. Asn-181 contributes to the NAD(+) binding site. Residues Arg-197, 210 to 211 (TG), and Arg-233 contribute to the D-glyceraldehyde 3-phosphate site. Asn-314 is a binding site for NAD(+).

This sequence belongs to the glyceraldehyde-3-phosphate dehydrogenase family. Homotetramer.

The protein resides in the cytoplasm. The enzyme catalyses D-glyceraldehyde 3-phosphate + phosphate + NAD(+) = (2R)-3-phospho-glyceroyl phosphate + NADH + H(+). It functions in the pathway carbohydrate degradation; glycolysis; pyruvate from D-glyceraldehyde 3-phosphate: step 1/5. In terms of biological role, catalyzes the oxidative phosphorylation of glyceraldehyde 3-phosphate (G3P) to 1,3-bisphosphoglycerate (BPG) using the cofactor NAD. The first reaction step involves the formation of a hemiacetal intermediate between G3P and a cysteine residue, and this hemiacetal intermediate is then oxidized to a thioester, with concomitant reduction of NAD to NADH. The reduced NADH is then exchanged with the second NAD, and the thioester is attacked by a nucleophilic inorganic phosphate to produce BPG. This chain is Glyceraldehyde-3-phosphate dehydrogenase (gap), found in Clostridium pasteurianum.